We begin with the raw amino-acid sequence, 204 residues long: dITP/XTP pyrophosphatase (204 aa).

8 to 13 (SRNRKK) lines the substrate pocket. Catalysis depends on aspartate 73, which acts as the Proton acceptor. Aspartate 73 is a Mg(2+) binding site. Residues serine 74, 155–158 (FGYD), lysine 179, and 184–185 (HR) each bind substrate.

Belongs to the HAM1 NTPase family. As to quaternary structure, homodimer. The cofactor is Mg(2+).

It carries out the reaction XTP + H2O = XMP + diphosphate + H(+). The catalysed reaction is dITP + H2O = dIMP + diphosphate + H(+). It catalyses the reaction ITP + H2O = IMP + diphosphate + H(+). Functionally, pyrophosphatase that catalyzes the hydrolysis of nucleoside triphosphates to their monophosphate derivatives, with a high preference for the non-canonical purine nucleotides XTP (xanthosine triphosphate), dITP (deoxyinosine triphosphate) and ITP. Seems to function as a house-cleaning enzyme that removes non-canonical purine nucleotides from the nucleotide pool, thus preventing their incorporation into DNA/RNA and avoiding chromosomal lesions. This chain is dITP/XTP pyrophosphatase, found in Mycolicibacterium paratuberculosis (strain ATCC BAA-968 / K-10) (Mycobacterium paratuberculosis).